Consider the following 423-residue polypeptide: Keratin, type I cytoskeletal 18 (423 aa).

Ser2 bears the N-acetylserine mark. The head stretch occupies residues 2-71 (SFTTRSTTFS…GLAGMGGIQT (70 aa)). 4 positions are modified to phosphoserine: Ser7, Ser11, Ser16, and Ser19. 2 positions are modified to phosphoserine; alternate: Ser31 and Ser32. 2 O-linked (GlcNAc) serine; alternate glycosylation sites follow: Ser31 and Ser32. At Ser35 the chain carries Phosphoserine. Tyr37 bears the Phosphotyrosine mark. A Phosphoserine modification is found at Ser43. Arg46 is modified (omega-N-methylarginine). Ser50 carries the phosphoserine; alternate modification. O-linked (GlcNAc) serine; alternate glycosylation is present at Ser50. The residue at position 52 (Ser52) is a Phosphoserine; by MAPKAPK2 and MAPKAPK3. A phosphoserine mark is found at Ser57 and Ser60. The segment at 62–366 (GLAGMGGIQT…EALLNIKVKL (305 aa)) is necessary for interaction with PNN. The interaction with TRADD stretch occupies residues 69–121 (IQTEKETMQDLNDRLASYLDKVKSLETENRRLESKIREHLEKKGPQGVRDWGH). The interval 72 to 107 (EKETMQDLNDRLASYLDKVKSLETENRRLESKIREH) is coil 1A. Residues 72-384 (EKETMQDLND…RLLEDGEDFS (313 aa)) enclose the IF rod domain. Residue Lys73 forms a Glycyl lysine isopeptide (Lys-Gly) (interchain with G-Cter in SUMO2) linkage. Ser85 and Ser92 each carry phosphoserine. Residues 108–125 (LEKKGPQGVRDWGHYFKI) are linker 1. N6-acetyllysine is present on Lys124. The interval 126–217 (IEDLRAQIFA…KNHEEEVQGL (92 aa)) is coil 1B. Ser137 and Ser170 each carry phosphoserine. Positions 218–241 (EAQIASSGLTVEVDAPKSQDLSKI) are linker 12. Residues 236–384 (QDLSKIMADI…RLLEDGEDFS (149 aa)) are interaction with DNAJB6. Lys240 is covalently cross-linked (Glycyl lysine isopeptide (Lys-Gly) (interchain with G-Cter in SUMO2)). A coil 2 region spans residues 242 to 380 (MADIRAQYEA…ATYRRLLEDG (139 aa)). Thr295 is modified (phosphothreonine). Ser316 carries the post-translational modification Phosphoserine. Residues Lys363 and Lys365 each participate in a glycyl lysine isopeptide (Lys-Gly) (interchain with G-Cter in SUMO2) cross-link. The interval 381–423 (EDFSLNDALDSSNSMQTVQKTTTRKIVDGRVVSETNDTRVLRH) is tail. Ser384, Ser391, Ser392, and Ser394 each carry phosphoserine. Thr397 bears the Phosphothreonine mark.

It belongs to the intermediate filament family. As to quaternary structure, heterotetramer of two type I and two type II keratins. KRT18 associates with KRT8. Interacts with PLEC isoform 1C, when in a heterodimer with KRT8. Interacts with PNN and mutated CFTR. Interacts with YWHAE, YWHAH and YWHAZ only when phosphorylated. Interacts with the thrombin-antithrombin complex. Interacts with DNAJB6, TCHP and TRADD. Interacts with FAM83H. Interacts with EPPK1. Interacts with PKP1 and PKP2. Post-translationally, phosphorylation increases by IL-6. Proteolytically cleaved by caspases during epithelial cell apoptosis. Cleavage occurs at Asp-231 by either caspase-3, caspas-6 or caspase-7. In terms of processing, O-GlcNAcylation increases solubility, and decreases stability by inducing proteasomal degradation. As to expression, expressed in endoderm, intestinal epithelial cells and in most extraembryonic tissues.

It localises to the nucleus matrix. Its subcellular location is the cytoplasm. The protein localises to the perinuclear region. The protein resides in the nucleus. It is found in the nucleolus. Its function is as follows. When phosphorylated, plays a role in filament reorganization. Involved in the delivery of mutated CFTR to the plasma membrane. Involved in the uptake of thrombin-antithrombin complexes by hepatic cells. Together with KRT8, is involved in interleukin-6 (IL-6)-mediated barrier protection. This chain is Keratin, type I cytoskeletal 18 (Krt18), found in Mus musculus (Mouse).